The primary structure comprises 71 residues: Permeability factor 2 (71 aa).

2 disulfides stabilise this stretch: C7/C33 and C9/C49.

It belongs to the intercrine alpha (chemokine CxC) family. As to quaternary structure, homodimer.

It is found in the secreted. Its function is as follows. Has chemotactic activity for neutrophils. The chain is Permeability factor 2 from Oryctolagus cuniculus (Rabbit).